A 270-amino-acid chain; its full sequence is MDNKIVYVVSDSVGETADLVVRAAMGQFPFAPDIRRVPYVEDTGTLKEVISIAKSNQALICFTLVKPDMRQYLVTEAAKEGVEAYDIIGPLIDQIEEITGQVPRYEPGVVRRLDEEYFKKIEAIEFAVKYDDGRDARGILKADIVLIGVSRTSKTPLSQYLAHNKRLKVANVPLVPEVDPPEELYQVAKEKCFGLKITPDKLNHIRKERLKSLGLSDGATYANINRIQEEIDHFEEVISKINCQVIDVSNKAIEETANIIVNAVQNQKMF.

An ADP-binding site is contributed by 148 to 155 (GVSRTSKT).

Belongs to the pyruvate, phosphate/water dikinase regulatory protein family. PDRP subfamily.

It carries out the reaction N(tele)-phospho-L-histidyl/L-threonyl-[pyruvate, phosphate dikinase] + ADP = N(tele)-phospho-L-histidyl/O-phospho-L-threonyl-[pyruvate, phosphate dikinase] + AMP + H(+). The enzyme catalyses N(tele)-phospho-L-histidyl/O-phospho-L-threonyl-[pyruvate, phosphate dikinase] + phosphate + H(+) = N(tele)-phospho-L-histidyl/L-threonyl-[pyruvate, phosphate dikinase] + diphosphate. Its function is as follows. Bifunctional serine/threonine kinase and phosphorylase involved in the regulation of the pyruvate, phosphate dikinase (PPDK) by catalyzing its phosphorylation/dephosphorylation. This chain is Putative pyruvate, phosphate dikinase regulatory protein, found in Bacillus cereus (strain B4264).